Here is a 566-residue protein sequence, read N- to C-terminus: Bifunctional NADP phosphatase/NAD kinase (566 aa).

The segment at 1–283 (MDMLEMALNI…KLVGIFGNRW (283 aa)) is NADP phosphatase. 5 residues coordinate Mg(2+): glutamate 66, aspartate 85, valine 87, aspartate 88, and aspartate 229. An NAD kinase region spans residues 275–566 (LVGIFGNRWR…YNKLKKLSLM (292 aa)). The Proton acceptor role is filled by aspartate 355. NAD(+) is bound by residues 355-356 (DG), arginine 360, 430-431 (NE), lysine 441, arginine 458, aspartate 460, 471-476 (TAYSLS), and asparagine 528.

It in the N-terminal section; belongs to the inositol monophosphatase superfamily. The protein in the C-terminal section; belongs to the NAD kinase family. In terms of assembly, homotetramer. The cofactor is Mg(2+).

The protein localises to the cytoplasm. The enzyme catalyses NAD(+) + ATP = ADP + NADP(+) + H(+). The catalysed reaction is NADP(+) + H2O = phosphate + NAD(+). Functionally, involved in the regulation of the intracellular balance between NAD(H) and NADP(H), and is a key enzyme in the biosynthesis of NADP. Catalyzes the phosphorylation and dephosphorylation of NAD and NADP, respectively. Although it shows conflicting dual activities and is able to supply NADP, it seems that its physiological role is to prevent excess accumulation of NADP. The polypeptide is Bifunctional NADP phosphatase/NAD kinase (Methanococcus maripaludis (strain DSM 14266 / JCM 13030 / NBRC 101832 / S2 / LL)).